We begin with the raw amino-acid sequence, 264 residues long: N-carbamoylsarcosine amidase (264 aa).

The active-site Nucleophile is the Cys177. The disordered stretch occupies residues 240–264; that stretch reads TVPKTLSDPQPEVEAPADPVFAEQH.

Homotetramer. The cofactor is sulfate.

It carries out the reaction N-carbamoylsarcosine + H2O + 2 H(+) = sarcosine + NH4(+) + CO2. It functions in the pathway amine and polyamine degradation; creatinine degradation; sarcosine from creatinine: step 3/3. This chain is N-carbamoylsarcosine amidase, found in Arthrobacter sp.